Here is a 136-residue protein sequence, read N- to C-terminus: Large ribosomal subunit protein bL17 (136 aa).

This sequence belongs to the bacterial ribosomal protein bL17 family. As to quaternary structure, part of the 50S ribosomal subunit. Contacts protein L32.

The polypeptide is Large ribosomal subunit protein bL17 (Rickettsia prowazekii (strain Madrid E)).